The sequence spans 379 residues: MANLRKTHPLLKIANDALVDLPTPSNISAWWNFGSLLGLCLISQILTGLFLAMHYTSDISTAFSSVAHICRDVNYGWLIRNLHANGASFFFICLYLHIARGLYYGSYLYKETWNIGVVLFLLVMMTAFVGYVLPWGQMSFWGATVITNLLSAVPYVGNSLVQWIWGGFSVDNATLTRFFAFHFLFPFVVAGATMIHLLFLHETGSSNPVGLNSDADKVPFHPYFSYKDLLGFIIMLTALTMLALFYPNLLGDPDNFTPANPMVTPPHIKPEWYFLFAYAILRSIPNKLGGVLALLSSILVLMVVPILHTSKQRGLTFRPASQLLFWILVADMLVLTWIGGMPVEHPYIIIGQVASVLYFSLFLVLNPLVGWLENKVMNW.

4 consecutive transmembrane segments (helical) span residues 33–53, 77–98, 113–133, and 178–198; these read FGSL…FLAM, WLIR…YLHI, WNIG…GYVL, and FFAF…IHLL. Residues His-83 and His-97 each contribute to the heme b site. Positions 182 and 196 each coordinate heme b. His-201 serves as a coordination point for a ubiquinone. The next 4 membrane-spanning stretches (helical) occupy residues 226–246, 288–308, 320–340, and 347–367; these read YKDL…ALFY, LGGV…PILH, ASQL…WIGG, and YIII…VLNP.

The protein belongs to the cytochrome b family. The cytochrome bc1 complex contains 3 respiratory subunits (MT-CYB, CYC1 and UQCRFS1), 2 core proteins (UQCRC1 and UQCRC2) and probably 6 low-molecular weight proteins. Heme b is required as a cofactor.

It localises to the mitochondrion inner membrane. Component of the ubiquinol-cytochrome c reductase complex (complex III or cytochrome b-c1 complex) that is part of the mitochondrial respiratory chain. The b-c1 complex mediates electron transfer from ubiquinol to cytochrome c. Contributes to the generation of a proton gradient across the mitochondrial membrane that is then used for ATP synthesis. This is Cytochrome b (mt-cyb) from Anguilla dieffenbachii (New Zealand longfin eel).